The following is a 37-amino-acid chain: Large ribosomal subunit protein bL36A (37 aa).

The protein belongs to the bacterial ribosomal protein bL36 family.

This Leifsonia xyli subsp. xyli (strain CTCB07) protein is Large ribosomal subunit protein bL36A.